Consider the following 206-residue polypeptide: dCTP deaminase, dUMP-forming (206 aa).

DCTP contacts are provided by residues 117–122 (RSSFGR), Asp-135, 143–145 (TLE), Gln-163, Tyr-177, Lys-184, and Gln-188. Glu-145 functions as the Proton donor/acceptor in the catalytic mechanism.

It belongs to the dCTP deaminase family. As to quaternary structure, homotrimer.

The enzyme catalyses dCTP + 2 H2O = dUMP + NH4(+) + diphosphate. It participates in pyrimidine metabolism; dUMP biosynthesis; dUMP from dCTP: step 1/1. Functionally, bifunctional enzyme that catalyzes both the deamination of dCTP to dUTP and the hydrolysis of dUTP to dUMP without releasing the toxic dUTP intermediate. In Methanococcus maripaludis (strain C7 / ATCC BAA-1331), this protein is dCTP deaminase, dUMP-forming.